The following is a 245-amino-acid chain: 1-(5-phosphoribosyl)-5-[(5-phosphoribosylamino)methylideneamino] imidazole-4-carboxamide isomerase (245 aa).

The active-site Proton acceptor is Asp7. The Proton donor role is filled by Asp129.

This sequence belongs to the HisA/HisF family.

The protein localises to the cytoplasm. It carries out the reaction 1-(5-phospho-beta-D-ribosyl)-5-[(5-phospho-beta-D-ribosylamino)methylideneamino]imidazole-4-carboxamide = 5-[(5-phospho-1-deoxy-D-ribulos-1-ylimino)methylamino]-1-(5-phospho-beta-D-ribosyl)imidazole-4-carboxamide. Its pathway is amino-acid biosynthesis; L-histidine biosynthesis; L-histidine from 5-phospho-alpha-D-ribose 1-diphosphate: step 4/9. This is 1-(5-phosphoribosyl)-5-[(5-phosphoribosylamino)methylideneamino] imidazole-4-carboxamide isomerase from Shigella flexneri serotype 5b (strain 8401).